Reading from the N-terminus, the 176-residue chain is Small ribosomal subunit protein uS5 (176 aa).

Residues 11-74 (LSEVLVDVNR…QAAKKRMMKV (64 aa)) form the S5 DRBM domain.

The protein belongs to the universal ribosomal protein uS5 family. In terms of assembly, part of the 30S ribosomal subunit. Contacts proteins S4 and S8.

Its function is as follows. With S4 and S12 plays an important role in translational accuracy. Located at the back of the 30S subunit body where it stabilizes the conformation of the head with respect to the body. This is Small ribosomal subunit protein uS5 from Rickettsia massiliae (strain Mtu5).